The following is a 411-amino-acid chain: Snake venom metalloproteinase VMP1 (411 aa).

The first 20 residues, 1 to 20 (MIQVLLVTICLAAFPYQGSS), serve as a signal peptide directing secretion. Residues 21 to 189 (IILESGNVND…KKAFQLNLTP (169 aa)) constitute a propeptide that is removed on maturation. Residues 197–393 (RYVELVIIAD…KNPQCILNKP (197 aa)) form the Peptidase M12B domain. The Ca(2+) site is built by Glu200 and Asp284. Disulfide bonds link Cys308–Cys388, Cys348–Cys372, and Cys350–Cys355. A glycan (N-linked (GlcNAc...) asparagine) is linked at Asn311. His333 lines the Zn(2+) pocket. Glu334 is a catalytic residue. Residues His337 and His343 each coordinate Zn(2+). Ca(2+) contacts are provided by Cys388, Asn391, Val403, Asn406, Leu408, and Glu410.

Belongs to the venom metalloproteinase (M12B) family. P-I subfamily. As to quaternary structure, monomer. Zn(2+) is required as a cofactor. As to expression, expressed by the venom gland.

The protein localises to the secreted. Inhibited by EDTA and 1,10-phenanthroline, but not by PMSF. Functionally, this venom zinc protease has fibrinolytic activity. The recombinant enzyme cleaves both alpha- (FGA) and beta-chains (FGB) of fibrinogen, but not the gamma-chain. The recombinant protein does not produce hemorrhage in mice and does not have effect on ADP- or collagen-stimulated platelet aggregation. This Agkistrodon piscivorus leucostoma (Western cottonmouth) protein is Snake venom metalloproteinase VMP1.